A 195-amino-acid polypeptide reads, in one-letter code: Penicillin-binding protein activator LpoB (195 aa).

Residues 1–16 (MKKRALIVLAALVLAS) form the signal peptide. Cys17 carries N-palmitoyl cysteine lipidation. A lipid anchor (S-diacylglycerol cysteine) is attached at Cys17. The disordered stretch occupies residues 19 to 51 (SRKPASPPAPIEPVPPPVTVSVQPPPPATSEPV). Over residues 23–51 (ASPPAPIEPVPPPVTVSVQPPPPATSEPV) the composition is skewed to pro residues.

It belongs to the LpoB family. Interacts with PBP1b.

The protein localises to the cell outer membrane. Its function is as follows. Regulator of peptidoglycan synthesis that is essential for the function of penicillin-binding protein 1B (PBP1b). The polypeptide is Penicillin-binding protein activator LpoB (Sodalis glossinidius (strain morsitans)).